A 341-amino-acid chain; its full sequence is KH domain-containing RNA-binding protein QKI (341 aa).

Residues 11 to 82 (PNPTPDYLMQ…PDAVGPIVQL (72 aa)) form a qua1 domain; involved in homodimerization region. The 67-residue stretch at 87-153 (YVPVKEYPDF…WEHLNEDLHV (67 aa)) folds into the KH domain. Residues 182–213 (AAEGEDSLKKMQLMELAILNGTYRDANIKSPA) are qua2 domain; involved in RNA binding. At Ser188 the chain carries Phosphoserine. Residue Arg227 is modified to Omega-N-methylarginine. Arg242 carries the post-translational modification Asymmetric dimethylarginine; by CARM1; alternate. Arg242 carries the omega-N-methylarginine; alternate modification. Position 256 is an omega-N-methylarginine (Arg256). The SH3-binding signature appears at 276–279 (PPGP). The short motif at 324 to 330 (RVHPYQR) is the Nuclear localization signal element.

The protein belongs to the quaking family. Homodimer; does not require RNA to homodimerize. Able to heterodimerize with BICC1. In terms of processing, methylated by PRMT1. Post-translationally, tyrosine phosphorylated at its C-terminus, probably by FYN. Phosphorylation leads to decreased mRNA-binding affinity, affecting transport and/or stabilization of MBP mRNA. Ubiquitinated by RNF6 in macrophages, leading to its degradation. Present in myelinating oligodendrocytes (at protein level).

The protein resides in the nucleus. The protein localises to the cytoplasm. Functionally, RNA reader protein, which recognizes and binds specific RNAs, thereby regulating RNA metabolic processes, such as pre-mRNA splicing, circular RNA (circRNA) formation, mRNA export, mRNA stability and/or translation. Involved in various cellular processes, such as mRNA storage into stress granules, apoptosis, lipid deposition, interferon response, glial cell fate and development. Binds to the 5'-NACUAAY-N(1,20)-UAAY-3' RNA core sequence. Acts as a mRNA modification reader that specifically recognizes and binds mRNA transcripts modified by internal N(7)-methylguanine (m7G). Promotes the formation of circular RNAs (circRNAs) during the epithelial to mesenchymal transition and in cardiomyocytes: acts by binding to sites flanking circRNA-forming exons. CircRNAs are produced by back-splicing circularization of pre-mRNAs. Plays a central role in myelinization via 3 distinct mechanisms. First, acts by protecting and promoting stability of target mRNAs such as MBP, SIRT2 and CDKN1B, which promotes oligodendrocyte differentiation. Second, participates in mRNA transport by regulating the nuclear export of MBP mRNA. Finally, indirectly regulates mRNA splicing of MAG pre-mRNA during oligodendrocyte differentiation by acting as a negative regulator of MAG exon 12 alternative splicing: acts by binding to HNRNPA1 mRNA splicing factor, preventing its translation. Involved in microglia differentiation and remyelination by regulating microexon alternative splicing of the Rho GTPase pathway. Involved in macrophage differentiation: promotes monocyte differentiation by regulating pre-mRNA splicing in naive peripheral blood monocytes. Acts as an important regulator of muscle development: required for the contractile function of cardiomyocytes by regulating alternative splicing of cardiomyocyte transcripts. Acts as a negative regulator of thermogenesis by decreasing stability, nuclear export and translation of mRNAs encoding PPARGC1A and UCP1. Also required for visceral endoderm function and blood vessel development. May also play a role in smooth muscle development. In addition to its RNA-binding activity, also acts as a nuclear transcription coactivator for SREBF2/SREBP2. The protein is KH domain-containing RNA-binding protein QKI of Rattus norvegicus (Rat).